We begin with the raw amino-acid sequence, 811 residues long: G-type lectin S-receptor-like serine/threonine-protein kinase LECRK2 (811 aa).

Residues methionine 1–alanine 23 form the signal peptide. The region spanning glutamine 24–glycine 153 is the Bulb-type lectin domain. Residues glutamine 24–serine 464 lie on the Extracellular side of the membrane. 7 N-linked (GlcNAc...) asparagine glycosylation sites follow: asparagine 26, asparagine 39, asparagine 59, asparagine 219, asparagine 226, asparagine 237, and asparagine 242. The EGF-like; atypical domain maps to proline 292–arginine 344. Disulfide bonds link cysteine 296–cysteine 314, cysteine 308–cysteine 325, cysteine 327–cysteine 343, cysteine 389–cysteine 411, and cysteine 393–cysteine 399. A glycan (N-linked (GlcNAc...) asparagine) is linked at asparagine 321. One can recognise a PAN domain in the interval cysteine 352–proline 436. The chain crosses the membrane as a helical span at residues leucine 465–threonine 485. Residues tyrosine 486 to alanine 811 are Cytoplasmic-facing. Residues glycine 521 to valine 795 enclose the Protein kinase domain. ATP contacts are provided by residues leucine 527–valine 535 and lysine 551. Aspartate 645 acts as the Proton acceptor in catalysis.

The protein belongs to the protein kinase superfamily. Ser/Thr protein kinase family.

The protein resides in the membrane. It carries out the reaction L-seryl-[protein] + ATP = O-phospho-L-seryl-[protein] + ADP + H(+). It catalyses the reaction L-threonyl-[protein] + ATP = O-phospho-L-threonyl-[protein] + ADP + H(+). Its function is as follows. Involved in resistance against the herbivorous insect brown planthopper (N.lugens, BPH). Member of the BPH3 (BPH resistance locus 3) cluster which contains LECRK1, LECRK2 and LECRK3. The polypeptide is G-type lectin S-receptor-like serine/threonine-protein kinase LECRK2 (Oryza sativa subsp. japonica (Rice)).